Consider the following 491-residue polypeptide: Ketol-acid reductoisomerase (NADP(+)) (491 aa).

Positions 15 to 208 (AQLGKCRFMG…GGHRAGVLES (194 aa)) constitute a KARI N-terminal Rossmann domain. NADP(+) contacts are provided by residues 45–48 (CGAQ), Arg-68, Arg-76, Ser-78, and 108–110 (DKQ). His-132 is an active-site residue. Gly-158 is a binding site for NADP(+). 2 KARI C-terminal knotted domains span residues 209 to 344 (SFVA…TAPQ) and 345 to 484 (FEGK…MTDM). 4 residues coordinate Mg(2+): Asp-217, Glu-221, Glu-389, and Glu-393. Ser-414 serves as a coordination point for substrate.

The protein belongs to the ketol-acid reductoisomerase family. Mg(2+) is required as a cofactor.

It catalyses the reaction (2R)-2,3-dihydroxy-3-methylbutanoate + NADP(+) = (2S)-2-acetolactate + NADPH + H(+). It carries out the reaction (2R,3R)-2,3-dihydroxy-3-methylpentanoate + NADP(+) = (S)-2-ethyl-2-hydroxy-3-oxobutanoate + NADPH + H(+). Its pathway is amino-acid biosynthesis; L-isoleucine biosynthesis; L-isoleucine from 2-oxobutanoate: step 2/4. The protein operates within amino-acid biosynthesis; L-valine biosynthesis; L-valine from pyruvate: step 2/4. Involved in the biosynthesis of branched-chain amino acids (BCAA). Catalyzes an alkyl-migration followed by a ketol-acid reduction of (S)-2-acetolactate (S2AL) to yield (R)-2,3-dihydroxy-isovalerate. In the isomerase reaction, S2AL is rearranged via a Mg-dependent methyl migration to produce 3-hydroxy-3-methyl-2-ketobutyrate (HMKB). In the reductase reaction, this 2-ketoacid undergoes a metal-dependent reduction by NADPH to yield (R)-2,3-dihydroxy-isovalerate. This chain is Ketol-acid reductoisomerase (NADP(+)), found in Salmonella heidelberg (strain SL476).